Reading from the N-terminus, the 544-residue chain is Chaperonin GroEL (544 aa).

Residues 30 to 33 (TLGP), Lys-51, 87 to 91 (DGTTT), Gly-415, and Asp-495 each bind ATP.

The protein belongs to the chaperonin (HSP60) family. In terms of assembly, forms a cylinder of 14 subunits composed of two heptameric rings stacked back-to-back. Interacts with the co-chaperonin GroES.

The protein localises to the cell outer membrane. The enzyme catalyses ATP + H2O + a folded polypeptide = ADP + phosphate + an unfolded polypeptide.. In terms of biological role, together with its co-chaperonin GroES, plays an essential role in assisting protein folding. The GroEL-GroES system forms a nano-cage that allows encapsulation of the non-native substrate proteins and provides a physical environment optimized to promote and accelerate protein folding. The sequence is that of Chaperonin GroEL from Neisseria gonorrhoeae.